We begin with the raw amino-acid sequence, 99 residues long: MSLTSTDIARIANLARLELKAAESERMLTQINGFFALVEKMRAVDTTGIEPLAHPVATVQDITLRLREDRVSEPNQREANQRNAPALEHGLFLVPKVIE.

Belongs to the GatC family. As to quaternary structure, heterotrimer of A, B and C subunits.

The catalysed reaction is L-glutamyl-tRNA(Gln) + L-glutamine + ATP + H2O = L-glutaminyl-tRNA(Gln) + L-glutamate + ADP + phosphate + H(+). The enzyme catalyses L-aspartyl-tRNA(Asn) + L-glutamine + ATP + H2O = L-asparaginyl-tRNA(Asn) + L-glutamate + ADP + phosphate + 2 H(+). Its function is as follows. Allows the formation of correctly charged Asn-tRNA(Asn) or Gln-tRNA(Gln) through the transamidation of misacylated Asp-tRNA(Asn) or Glu-tRNA(Gln) in organisms which lack either or both of asparaginyl-tRNA or glutaminyl-tRNA synthetases. The reaction takes place in the presence of glutamine and ATP through an activated phospho-Asp-tRNA(Asn) or phospho-Glu-tRNA(Gln). This is Aspartyl/glutamyl-tRNA(Asn/Gln) amidotransferase subunit C from Albidiferax ferrireducens (strain ATCC BAA-621 / DSM 15236 / T118) (Rhodoferax ferrireducens).